A 500-amino-acid chain; its full sequence is Apolipoprotein N-acyltransferase (500 aa).

A run of 6 helical transmembrane segments spans residues 5–25 (VAPF…WIFV), 38–58 (LLLL…FWIT), 74–94 (LAIT…FGAI), 111–131 (ILIG…GPLW), 145–165 (AILH…IVSV), and 185–205 (LAIA…LYTA). The CN hydrolase domain maps to 215-462 (LKVGIVQGNI…ETIYRRQTQN (248 aa)). Catalysis depends on E261, which acts as the Proton acceptor. K318 is a catalytic residue. C369 (nucleophile) is an active-site residue. Residues 469 to 489 (DWFTPLLVGLSFLGWSLNIFW) traverse the membrane as a helical segment.

This sequence belongs to the CN hydrolase family. Apolipoprotein N-acyltransferase subfamily.

The protein localises to the cell inner membrane. It catalyses the reaction N-terminal S-1,2-diacyl-sn-glyceryl-L-cysteinyl-[lipoprotein] + a glycerophospholipid = N-acyl-S-1,2-diacyl-sn-glyceryl-L-cysteinyl-[lipoprotein] + a 2-acyl-sn-glycero-3-phospholipid + H(+). Its pathway is protein modification; lipoprotein biosynthesis (N-acyl transfer). Its function is as follows. Catalyzes the phospholipid dependent N-acylation of the N-terminal cysteine of apolipoprotein, the last step in lipoprotein maturation. The chain is Apolipoprotein N-acyltransferase from Nostoc sp. (strain PCC 7120 / SAG 25.82 / UTEX 2576).